The primary structure comprises 236 residues: MAATLLDVCAVVPAAGFGRRMQTECPKQYLSIGNKTILEHSVHALLAHPRVTRVVIAISPGDHRFAQLPLADHPQITVVDGGNERADSVLAGLQAVAEAQWVLVHDAARPCLHQDDLARLLAISENSRVGGILASPVRDTMKRGEPGKNAIAHTVERADLWHALTPQFFPRELLHDCLTRALNEGATITDEASALEYCGFHPALVEGRADNIKVTRPEDLALAEFYLTRTIHQEKA.

It belongs to the IspD/TarI cytidylyltransferase family. IspD subfamily. As to quaternary structure, homodimer.

The catalysed reaction is 2-C-methyl-D-erythritol 4-phosphate + CTP + H(+) = 4-CDP-2-C-methyl-D-erythritol + diphosphate. It functions in the pathway isoprenoid biosynthesis; isopentenyl diphosphate biosynthesis via DXP pathway; isopentenyl diphosphate from 1-deoxy-D-xylulose 5-phosphate: step 2/6. Catalyzes the formation of 4-diphosphocytidyl-2-C-methyl-D-erythritol from CTP and 2-C-methyl-D-erythritol 4-phosphate (MEP). The chain is 2-C-methyl-D-erythritol 4-phosphate cytidylyltransferase from Salmonella newport (strain SL254).